The primary structure comprises 355 residues: Na(+)/H(+) exchange regulatory cofactor NHE-RF1 (355 aa).

S2 is subject to N-acetylserine. A phosphoserine mark is found at S2 and S46. The PDZ 1 domain maps to 14–94; that stretch reads LCCLEKGPNG…AVRLLVVDPE (81 aa). 2 stretches are compositionally biased toward basic and acidic residues: residues 110 to 119 and 127 to 146; these read LLRPQEKSEQ and DTHEAGDQNEAEKSHLRELR. The disordered stretch occupies residues 110–146; sequence LLRPQEKSEQAEPPAAADTHEAGDQNEAEKSHLRELR. Positions 149 to 229 constitute a PDZ 2 domain; sequence LCTMKKGPNG…EAKLLVVDKE (81 aa). The disordered stretch occupies residues 244 to 355; the sequence is EHLDGPLPEP…SKKNELFSNL (112 aa). Positions 259–268 are enriched in basic and acidic residues; sequence IQKESSREAL. Phosphoserine is present on residues S264, S275, S285, and S286. Residues 270–286 are compositionally biased toward low complexity; sequence EPASESPRPALARSASS. T288 bears the Phosphothreonine mark. 3 positions are modified to phosphoserine: S289, S294, and S297. The span at 303–323 shows a compositional bias: low complexity; it reads STEPSSTSSSSSDPILDLNIS. Residues 345 to 355 show a composition bias toward basic and acidic residues; it reads WSKKNELFSNL.

Homodimer, and heterodimer with NHERF2. Binds the N-termini of EZR, RDX and MSN. Binds the C-termini of PDGFRA, PDGFRB, ADRB2 and NOS2. Binds ARHGAP17, EPI64, RACK1, OPRK1, GNAQ, CTNNB1, PLCB3 and CLCN3. Forms a complex with CFTR and SLC4A7. Forms a complex with SLC4A7 and ATP6V1B1. Binds PDZK1. Binds the C-terminus of PAG1. In resting T-cells, part of a PAG1-NHERF1-MSN complex which is disrupted upon TCR activation. Directly interacts with HTR4. Interacts with MCC. Interacts with TRPC4 (via the PDZ-binding domain). Interacts (via the PDZ 1 domain) with PODXL (via the C-terminal PDZ-binding motif DTHL); interaction is not detected in glomerular epithelium cells. Interacts (via the PDZ 1 domain) with PODXL (via the C-terminal PDZ-binding motif DTHL); the interaction take place early in the secretory pathway and is necessary for its apical membrane sorting. Interacts with SLC34A1. Interacts with CFTR, SLC26A3 and SLC26A6. Interacts (via PDZ domains) with ACE2 (via PDZ-binding motif); the interaction may enhance ACE2 membrane residence. As to expression, expressed in spermatogenic cells.

The protein resides in the cytoplasm. It localises to the apical cell membrane. It is found in the cell projection. The protein localises to the filopodium. Its subcellular location is the ruffle. The protein resides in the microvillus. It localises to the endomembrane system. Scaffold protein that connects plasma membrane proteins with members of the ezrin/moesin/radixin family and thereby helps to link them to the actin cytoskeleton and to regulate their surface expression. Necessary for recycling of internalized ADRB2. Was first known to play a role in the regulation of the activity and subcellular location of SLC9A3. Necessary for cAMP-mediated phosphorylation and inhibition of SLC9A3. May enhance Wnt signaling. May participate in HTR4 targeting to microvilli. Involved in the regulation of phosphate reabsorption in the renal proximal tubules. Involved in sperm capacitation. May participate in the regulation of the chloride and bicarbonate homeostasis in spermatozoa. In Mus musculus (Mouse), this protein is Na(+)/H(+) exchange regulatory cofactor NHE-RF1 (Nherf1).